A 143-amino-acid polypeptide reads, in one-letter code: Hemoglobin subunit alpha (143 aa).

At serine 2 the chain carries N-acetylserine. The region spanning 2 to 143 (SLSDKDKSAV…VALALAEKYR (142 aa)) is the Globin domain. Histidine 60 contributes to the O2 binding site. Histidine 89 lines the heme b pocket.

This sequence belongs to the globin family. As to quaternary structure, heterotetramer of two alpha chains and two beta chains. In terms of tissue distribution, red blood cells.

Its function is as follows. Involved in oxygen transport from gills to the various peripheral tissues. This Pogonophryne scotti (Saddleback plunderfish) protein is Hemoglobin subunit alpha (hba).